A 613-amino-acid polypeptide reads, in one-letter code: Leucine-rich repeat and immunoglobulin-like domain-containing nogo receptor-interacting protein 1 (613 aa).

An N-terminal signal peptide occupies residues 1–34 (MLAGEASMRSPILACWQPILLLMLGSILSGSATG). 2 disulfides stabilise this stretch: Cys35–Cys41 and Cys39–Cys50. An LRRNT domain is found at 35 to 64 (CPPRCECSAQERAVLCHRKRFMVVPEGIPT). Residues 35 to 554 (CPPRCECSAQ…FDIKTLIIAT (520 aa)) are Extracellular-facing. LRR repeat units lie at residues 65-86 (ETRQ…EFAN), 89-110 (HLEE…AFNN), 113-134 (NLRT…VFTG), 137-158 (NLTK…MFQD), 161-182 (NLKS…AFSG), 185-206 (SLEQ…ALSH), 209-230 (GLIV…SFKR), 257-278 (NLTS…SVRH), 281-302 (YLRF…MLHD), 305-326 (RLQE…AFRG), and 329-350 (YLRI…AFHS). Asn137 is a glycosylation site (N-linked (GlcNAc...) asparagine). The N-linked (GlcNAc...) asparagine glycan is linked to Asn195. Residues Asn257, Asn267, and Asn286 are each glycosylated (N-linked (GlcNAc...) asparagine). Residue Asn334 is glycosylated (N-linked (GlcNAc...) asparagine). In terms of domain architecture, LRRCT spans 362 to 416 (NPLACDCRLLWVFRRRWRLNFNKQQPTCSTPEFVQGKEFKDFPDVLLPNYFTCRR). 3 disulfide bridges follow: Cys366–Cys389, Cys368–Cys414, and Cys439–Cys490. One can recognise an Ig-like C2-type domain in the interval 404–508 (PDVLLPNYFT…DTMLAHLHVR (105 aa)). Asn485, Asn498, Asn519, Asn530, and Asn535 each carry an N-linked (GlcNAc...) asparagine glycan. Residues 555–575 (TMGFISFLGVVLFCLVLLFLW) form a helical membrane-spanning segment. Residues 576–613 (SRGKGNTKHNIEIEYVPRKSDAGISSADAPRKFNMKMI) lie on the Cytoplasmic side of the membrane.

As to quaternary structure, homotetramer. Forms ternary complex with RTN4R/NGFR and RTN4R/TNFRSF19. N-glycosylated. Contains predominantly high-mannose glycans.

It is found in the cell membrane. Functionally, functional component of the Nogo receptor signaling complex (RTN4R/NGFR) in RhoA activation responsible for some inhibition of axonal regeneration by myelin-associated factors. Is also an important negative regulator of oligodentrocyte differentiation and axonal myelination. The polypeptide is Leucine-rich repeat and immunoglobulin-like domain-containing nogo receptor-interacting protein 1 (LINGO1) (Gallus gallus (Chicken)).